Consider the following 504-residue polypeptide: MASKLTPLTLLLLLLAGDRAFSDSEVTSHSSQDPLVVQEGSRDSVPERDGSRSPIEHTGQSSTWPTTSGSTKISNDTMDQVANESFIQHVQPAAQLPEDSPSQSPVNSSSPPSTASAPPTQAPTEPLCPEPLAWCSDSDRDSSEATLSEALTDFSVKLYHAFSATKKAETNMAFSPFSIASLLTQVLLGAGDSTKSNLEDILSYPKDFACVHQTLKAFSSKGVTSVSQIFHSPDLAIRDTYVNASLSLYGSSPRVLGPDGDANLKLINTWVAENTNHKINELLDSLPSDTRLVLLNAVYLSAKWKKTFEQKKMMASFLYKNSMIKVPMLSSKKYPLALFNDQTLKAKVGQLQLSHNLSFVIMVPQSPTHQLEDMEKALNPTVFKAILKKLELSKFQPTYVMMPRIKVKSSQDMLSIMEKLEFFDFTYDLNLCGLTEDPDLQVSSMKHETVLELTETGVEAAAASTISVARNLLIFEVQQPFLFLLWDQRHKFPVFMGRVYDPRA.

A signal peptide spans Met1–Ser22. Positions Asp23–Asn75 are disordered. Positions Ser24–Asp33 are enriched in polar residues. Basic and acidic residues predominate over residues Gly40–Ile55. Residues Thr58 to Asn75 are compositionally biased toward polar residues. N-linked (GlcNAc...) asparagine glycosylation is found at Asn75, Asn83, Asn107, Asn243, and Asn356. Residues Ala94–Leu132 are disordered. Residues Ser100–Glu125 show a composition bias toward low complexity.

It belongs to the serpin family. Interacts with MASP1.

It localises to the secreted. Functionally, serine protease inhibitor, which acrs as a regulator of the classical complement pathway. Forms a proteolytically inactive stoichiometric complex with the C1r or C1s proteases. May also regulate blood coagulation, fibrinolysis and the generation of kinins. Very efficient inhibitor of FXIIa. Inhibits chymotrypsin and kallikrein. This chain is Plasma protease C1 inhibitor (Serping1), found in Rattus norvegicus (Rat).